Consider the following 3080-residue polypeptide: MKEHIIYQKLYGLILMSSFIFLSDTLSLKGKKLDFFGRGDTYVSLIDTIPELSRFTACIDLVFMDDNSRYWMAFSYITNNALLGREDIDLGLAGDHQQLILYRLGKTFSIRHHLASFQWHTICLIWDGVKGKLELFLNKERILEVTDQPHNLTPHGTLFLGHFLKNESSEVKSMMRSFPGSLYYFQLWDHILENEEFMKCLDGNIVSWEEDVWLVNKIIPTVDRTLRCFVPENMTIQEKSTTVSQQIDMTTPSQITGVKPQNTAHSSTLLSQSIPIFATDYTTISYSNTTSPPLETMTAQKILKTLVDETATFAVDVLSTSSAISLPTQSISIDNTTNSMKKTKSPSSESTKTTKMVEAMATEIFQPPTPSNFLSTSRFTKNSVVSTTSAIKSQSAVTKTTSLFSTIESTSMSTTPCLKQKSTNTGALPISTAGQEFIESTAAGTVPWFTVEKTSPASTHVGTASSFPPEPVLISTAAPVDSVFPRNQTAFPLATTDMKIAFTVHSLTLPTRLIETTPAPRTAETELTSTNFQDVSLPRVEDAMSTSMSKETSSKTFSFLTSFSFTGTESVQTVIDAEATRTALTPEITLASTVAETMLSSTITGRVYTQNTPTADGHLLTLMSTRSASTSKAPESGPTSTTDEAAHLFSSNETIWTSRPDQALLASMNTTTILTFVPNENFTSAFHENTTYTEYLSATTNITPLKASPEGKGTTANDATTARYTTAVSKLTSPWFANFSIVSGTTSITNMPEFKLTTLLLKTIPMSTKPANELPLTPRETVVPSVDIISTLACIQPNFSTEESASETTQTEINGAIVFGGTTTPVPKSATTQRLNATVTRKEATSHYLMRKSTIAAVAEVSPFSTMLEVTDESAQRVTASVTVSSFPDIEKLSTPLDNKTATTEVRESWLLTKLVKTTPRSSYNEMTEMFNFNHTYVAHWTSETSEGISAGSPTSGSTHIFGEPLGASTTRISETSFSTTPTDRTATSLSDGILPPQPTAAHSSATPVPVTHMFSLPVNGSSVVAEETEVTMSEPSTLARAFSTSVLSDVSNLSSTTMTTALVPPLDQTASTTIVIVPTHGDLIRTTSEATVISVRKTSMAVPSLTETPFHSLRLSTPVTAKAETTLFSTSVDTVTPSTHTLVCSKPPPDNIPPASSTHVISTTSTPEATQPISQVEETSTYALSFPYTFSGGGVVASLATGTTETSVVDETTPSHISANKLTTSVNSHISSSATYRVHTPVSIQLVTSTSVLSSDKDQMTISLGKTPRTMEVTEMSPSKNSFISYSRGTPSLEMTDTGFPETTKISSHQTHSPSEIPLGTPSDGNLASSPTSGSTQITPTLTSSNTVGVHIPEMSTSLGKTALPSQALTITTFLCPEKESTSALPAYTPRTVEMIVNSTYVTHSVSYGQDTSFVDTTTSSSTRISNPMDINTTFSHLHSLRTQPEVTSVASFISESTQTFPESLSLSTAGLYNDGFTVLSDRITTAFSVPNVPTMLPRESSMATSTPIYQMSSLPVNVTAFTSKKVSDTPPIVITKSSKTMHPGCLKSPCTATSGPMSEMSSIPVNNSAFTPATVSSDTSTRVGLFSTLLSSVTPRTTMTMQTSTLDVTPVIYAGATSKNKMVSSAFTTEMIEAPSRITPTTFLSPTEPTLPFVKTVPTTIMAGIVTPFVGTTAFSPLSSKSTGAISSIPKTTFSPFLSATQQSSQADEATTLGILSGITNRSLSTVNSGTGVALTDTYSRITVPENMLSPTHADSLHTSFNIQVSPSLTSFKSASGPTKNVKTTTNCFSSNTRKMTSLLEKTSLTNYATSLNTPVSYPPWTPSSATLPSLTSFVYSPHSTEAEISTPKTSPPPTSQMVEFPVLGTRMTSSNTQPLLMTSWNIPTAEGSQFPISTTINVPTSNEMETETLHLVPGPLSTFTASQTGLVSKDVMAMSSIPMSGILPNHGLSENPSLSTSLRAITSTLADVKHTFEKMTTSVTPGTTLPSILSGATSGSVISKSPILTWLLSSLPSGSPPATVSNAPHVMTSSTVEVSKSTFLTSDMISAHPFTNLTTLPSATMSTILTRTIPTPTLGGITTGFPTSLPMSINVTDDIVYISTHPEASSRTTITANPRTVSHPSSFSRKTMSPSTTDHTLSVGAMPLPSSTITSSWNRIPTASSPSTLIIPKPTLDSLLNIMTTTSTVPGASFPLISTGVTYPFTATVSSPISSFFETTWLDSTPSFLSTEASTSPTATKSTVSFYNVEMSFSVFVEEPRIPITSVINEFTENSLNSIFQNSEFSLATLETQIKSRDISEEEMVMDRAILEQREGQEMATISYVPYSCVCQVIIKASSSLASSELMRKIKSKIHGNFTHGNFTQDQLTLLVNCEHVAVKKLEPGNCKADETASKYKGTYKWLLTNPTETAQTRCIKNEDGNATRFCSISINTGKSQWEKPKFKQCKLLQELPDKIVDLANITISDENAEDVAEHILNLINESPALGKEETKIIVSKISDISQCDEISMNLTHVMLQIINVVLEKQNNSASDLHEISNEILRIIERTGHKMEFSGQIANLTVAGLALAVLRGDHTFDGMAFSIHSYEEGTDPEIFLGNVPVGGILASIYLPKSLTERIPLSNLQTILFNFFGQTSLFKTKNVTKALTTYVVSASISDDMFIQNLADPVVITLQHIGGNQNYGQVHCAFWDFENNNGLGGWNSSGCKVKETNVNYTICQCDHLTHFGVLMDLSRSTVDSVNEQILALITYTGCGISSIFLGVAVVTYIAFHKLRKDYPAKILINLCTALLMLNLVFLINSWLSSFQKVGVCITAAVALHYFLLVSFTWMGLEAVHMYLALVKVFNIYIPNYILKFCLVGWGIPAIMVAITVSVKKDLYGTLSPTTPFCWIKDDSIFYISVVAYFCLIFLMNLSMFCTVLVQLNSVKSQIQKTRRKMILHDLKGTMSLTFLLGLTWGFAFFAWGPMRNFFLYLFAIFNTLQGFFIFVFHCVMKESVREQWQIHLCCGWLRLDNSSDGSSRCQIKVGYKQEGLKKIFEHKLLTPSLKSTATSSTFKSLGSAQGTPSEISFPNDDFDKDPYCSSP.

A signal peptide spans 1-27 (MKEHIIYQKLYGLILMSSFIFLSDTLS). At 28 to 2740 (LKGKKLDFFG…SRSTVDSVNE (2713 aa)) the chain is on the extracellular side. Residues 29 to 228 (KGKKLDFFGR…IPTVDRTLRC (200 aa)) form the Pentraxin (PTX) domain. Cystine bridges form between cysteine 58–cysteine 123 and cysteine 200–cysteine 228. Mg(2+) is bound at residue aspartate 202. N-linked (GlcNAc...) asparagine glycans are attached at residues asparagine 233, asparagine 487, asparagine 836, and asparagine 899. Residues 946 to 959 (SEGISAGSPTSGST) are compositionally biased toward polar residues. Residues 946-965 (SEGISAGSPTSGSTHIFGEP) form a disordered region. N-linked (GlcNAc...) asparagine glycosylation occurs at asparagine 1020. Positions 1274 to 1348 (VTEMSPSKNS…ITPTLTSSNT (75 aa)) are disordered. Polar residues-rich tracts occupy residues 1277–1296 (MSPSKNSFISYSRGTPSLEM), 1305–1315 (TKISSHQTHSP), and 1324–1348 (SDGNLASSPTSGSTQITPTLTSSNT). Residue asparagine 1519 is glycosylated (N-linked (GlcNAc...) asparagine). Over residues 2109-2139 (SRTTITANPRTVSHPSSFSRKTMSPSTTDHT) the composition is skewed to polar residues. The segment at 2109 to 2141 (SRTTITANPRTVSHPSSFSRKTMSPSTTDHTLS) is disordered. Residues asparagine 2361 and asparagine 2640 are each glycosylated (N-linked (GlcNAc...) asparagine). In terms of domain architecture, GAIN-B spans 2578–2734 (MAFSIHSYEE…GVLMDLSRST (157 aa)). 2 disulfide bridges follow: cysteine 2685/cysteine 2716 and cysteine 2704/cysteine 2718. The tract at residues 2685-2734 (CAFWDFENNNGLGGWNSSGCKVKETNVNYTICQCDHLTHFGVLMDLSRST) is GPS. Positions 2723 to 2734 (HFGVLMDLSRST) are stachel. The chain crosses the membrane as a helical span at residues 2741–2766 (QILALITYTGCGISSIFLGVAVVTYI). Residues 2767-2777 (AFHKLRKDYPA) lie on the Cytoplasmic side of the membrane. Residues 2778–2800 (KILINLCTALLMLNLVFLINSWL) traverse the membrane as a helical segment. Over 2801-2806 (SSFQKV) the chain is Extracellular. The chain crosses the membrane as a helical span at residues 2807–2835 (GVCITAAVALHYFLLVSFTWMGLEAVHMY). Residues cysteine 2809 and cysteine 2886 are joined by a disulfide bond. Residues 2836–2849 (LALVKVFNIYIPNY) lie on the Cytoplasmic side of the membrane. Residues 2850–2870 (ILKFCLVGWGIPAIMVAITVS) form a helical membrane-spanning segment. The Extracellular portion of the chain corresponds to 2871 to 2892 (VKKDLYGTLSPTTPFCWIKDDS). A helical membrane pass occupies residues 2893–2918 (IFYISVVAYFCLIFLMNLSMFCTVLV). The Cytoplasmic segment spans residues 2919–2937 (QLNSVKSQIQKTRRKMILH). The chain crosses the membrane as a helical span at residues 2938-2961 (DLKGTMSLTFLLGLTWGFAFFAWG). At 2962 to 2965 (PMRN) the chain is on the extracellular side. The chain crosses the membrane as a helical span at residues 2966-2989 (FFLYLFAIFNTLQGFFIFVFHCVM). The Cytoplasmic portion of the chain corresponds to 2990-3080 (KESVREQWQI…FDKDPYCSSP (91 aa)). Residues 3051–3065 (FKSLGSAQGTPSEIS) show a composition bias toward polar residues. The interval 3051–3080 (FKSLGSAQGTPSEISFPNDDFDKDPYCSSP) is disordered.

The protein belongs to the G-protein coupled receptor 2 family. Adhesion G-protein coupled receptor (ADGR) subfamily. As to quaternary structure, homodimer; homodimerizes via its Pentraxin domain in a calcium-independent manner. Heterodimer of 2 chains generated by proteolytic processing; the large extracellular N-terminal fragment and the membrane-bound C-terminal fragment predominantly remain associated and non-covalently linked. In terms of processing, autoproteolytically processed at the GPS region of the GAIN-B domain; this cleavage modulates receptor activity. Post-translationally, N-glycosylated. In terms of tissue distribution, detected in fetal retina. Highly expressed in normal enterochromaffin cells and in neuroendocrine carcinoma. Detected in normal liver; highly expressed in primary liver carcinoma.

It localises to the membrane. Forms a heterodimer of 2 chains generated by proteolytic processing that remain associated through non-covalent interactions mediated by the GAIN-B domain. In the inactivated receptor, the Stachel sequence (also named stalk) is embedded in the GAIN-B domain, where it adopts a beta-strand conformation. On activation, the Stachel moves into the 7 transmembrane region and adopts a twisted hook-shaped configuration that forms contacts within the receptor, leading to coupling of a G-alpha protein, which activates signaling. The cleaved GAIN-B and N-terminal domains can then dissociate from the rest of the receptor. In terms of biological role, orphan adhesion G-protein coupled receptor (aGPCR). Ligand binding causes a conformation change that triggers signaling via guanine nucleotide-binding proteins (G proteins) and modulates the activity of downstream effectors, such as adenylate cyclase. ADGRG4 is coupled to G(s) G proteins and mediates activation of adenylate cyclase activity. May be act as sensor of mechanical forces. This chain is Adhesion G-protein coupled receptor G4, found in Homo sapiens (Human).